The following is a 168-amino-acid chain: Photosystem I assembly protein Ycf3 (168 aa).

3 TPR repeats span residues Ala29–Pro62, Ser66–Leu99, and Ala117–Asn150.

The protein belongs to the Ycf3 family.

Its subcellular location is the plastid. The protein localises to the chloroplast thylakoid membrane. Essential for the assembly of the photosystem I (PSI) complex. May act as a chaperone-like factor to guide the assembly of the PSI subunits. This is Photosystem I assembly protein Ycf3 from Phaeodactylum tricornutum (strain CCAP 1055/1).